A 212-amino-acid polypeptide reads, in one-letter code: Minor capsid protein VP2 (212 aa).

The protein belongs to the norovirus VP2 family. In terms of assembly, homooligomer. The portal-like structure consists in 12 copies of VP2. Interacts with capsid protein VP1.

The protein resides in the virion. It localises to the host cytoplasm. In terms of biological role, minor structural protein that forms a portal-like structure at a unique three-fold axis of symmetry, following binding to the host receptor. The channel formed by VP2 may allow the delivery of the viral genome through the host endosomal membrane. In Norovirus (strain Human/NoV/United States/Norwalk/1968/GI) (Hu/NV/NV/1968/US), this protein is Minor capsid protein VP2.